We begin with the raw amino-acid sequence, 52 residues long: Lantibiotic epidermin (52 aa).

Residues 1-30 (MEAVKEKNDLFNLDVKVNAKESNDSGAEPR) constitute a propeptide that is removed on maturation. The segment at residues 33-37 (SKFIC) is a cross-link (lanthionine (Ser-Cys)). The beta-methyllanthionine (Thr-Cys) cross-link spans 38–41 (TPGC). Thr44 carries the post-translational modification (Z)-2,3-didehydrobutyrine. Residues 46-51 (SFNSYC) constitute a cross-link (lanthionine (Ser-Cys)). The S-(2-aminovinyl)-D-cysteine (Ser-Cys) cross-link spans 49–52 (SYCC).

The protein belongs to the type A lantibiotic family. In terms of processing, maturation of lantibiotics involves the enzymatic conversion of Thr, and Ser into dehydrated AA and the formation of thioether bonds with cysteine. The C-terminal lanthionine undergoes decarboxylation. This is followed by membrane translocation and cleavage of the modified precursor. The 2,3-didehydrobutyrine is determined to be the Z-isomer.

Lanthionine-containing peptide antibiotic (lantibiotic) active on Gram-positive bacteria. The bactericidal activity of lantibiotics is based on depolarization of energized bacterial cytoplasmic membranes, initiated by the formation of aqueous transmembrane pores. This Staphylococcus epidermidis protein is Lantibiotic epidermin (epiA).